Here is a 281-residue protein sequence, read N- to C-terminus: Ornithine lipid ester-linked acyl 2-hydroxylase (281 aa).

Over residues 1-24 the composition is skewed to polar residues; the sequence is MTESPLSAPAPTSNQSPAPEQTFG. The tract at residues 1 to 29 is disordered; sequence MTESPLSAPAPTSNQSPAPEQTFGTAGIA.

Belongs to the aspartyl/asparaginyl beta-hydroxylase family.

The catalysed reaction is an N(2)-[(3R)-3-(2-saturated-acyloxy)acyl]-L-ornithine lipid + 2-oxoglutarate + O2 = a 2-hydroxyornithine lipid + succinate + CO2. Its pathway is lipid metabolism. Functionally, involved in the biosynthesis of ornithine lipids (OLs), which are phosphorus-free membrane lipids. Catalyzes the hydroxylation at the 2 position of the secondary fatty acid of OL. Contributes to symbiotic performance and acid tolerance. The sequence is that of Ornithine lipid ester-linked acyl 2-hydroxylase from Rhizobium tropici.